We begin with the raw amino-acid sequence, 689 residues long: Pentatricopeptide repeat-containing protein At1g71460, chloroplastic (689 aa).

The N-terminal 49 residues, 1–49 (MEVVSSLGIRDLPASLSVTTSLNHRPHRSDKDGAPAKSPIRPSRTRRPS), are a transit peptide targeting the chloroplast. Residues 16–68 (LSVTTSLNHRPHRSDKDGAPAKSPIRPSRTRRPSTSPAKKPKPFRERDAFPSS) are disordered. Positions 38 to 52 (SPIRPSRTRRPSTSP) are enriched in low complexity. 18 PPR repeats span residues 75 to 109 (NPYI…GIPV), 110 to 144 (NATT…GLES), 145 to 175 (NEFL…STSS), 176 to 212 (NVYS…GVDL), 213 to 247 (NVYS…GLFN), 248 to 282 (SVFL…DIVV), 283 to 309 (WGAM…MISE), 315 to 350 (NSVI…NYVE), 351 to 381 (QPFV…SKQR), 382 to 416 (NAIS…GFRP), 417 to 451 (DVVT…LFLP), 452 to 482 (NVSL…LEQR), 483 to 517 (NVKA…KHRP), 518 to 552 (DSVT…EFES), 553 to 583 (IPFV…VAVK), 584 to 618 (GSLT…GFTP), 619 to 649 (NTFT…MLRM), and 655 to 689 (SEEH…SLQT).

This sequence belongs to the PPR family. PCMP-A subfamily.

Its subcellular location is the plastid. It is found in the chloroplast. The polypeptide is Pentatricopeptide repeat-containing protein At1g71460, chloroplastic (PCMP-A3) (Arabidopsis thaliana (Mouse-ear cress)).